Reading from the N-terminus, the 288-residue chain is ATP synthase gamma chain (288 aa).

It belongs to the ATPase gamma chain family. F-type ATPases have 2 components, CF(1) - the catalytic core - and CF(0) - the membrane proton channel. CF(1) has five subunits: alpha(3), beta(3), gamma(1), delta(1), epsilon(1). CF(0) has three main subunits: a, b and c.

Its subcellular location is the cell inner membrane. Its function is as follows. Produces ATP from ADP in the presence of a proton gradient across the membrane. The gamma chain is believed to be important in regulating ATPase activity and the flow of protons through the CF(0) complex. This Vibrio vulnificus (strain CMCP6) protein is ATP synthase gamma chain.